The sequence spans 102 residues: ATP-dependent Clp protease adapter protein ClpS (102 aa).

The protein belongs to the ClpS family. In terms of assembly, binds to the N-terminal domain of the chaperone ClpA.

In terms of biological role, involved in the modulation of the specificity of the ClpAP-mediated ATP-dependent protein degradation. The sequence is that of ATP-dependent Clp protease adapter protein ClpS from Wolinella succinogenes (strain ATCC 29543 / DSM 1740 / CCUG 13145 / JCM 31913 / LMG 7466 / NCTC 11488 / FDC 602W) (Vibrio succinogenes).